The sequence spans 438 residues: Serine--tRNA ligase (438 aa).

Residue 245 to 247 (TAE) participates in L-serine binding. 276–278 (RSE) serves as a coordination point for ATP. Glutamate 299 serves as a coordination point for L-serine. 363–366 (EISS) provides a ligand contact to ATP. Serine 398 contacts L-serine.

The protein belongs to the class-II aminoacyl-tRNA synthetase family. Type-1 seryl-tRNA synthetase subfamily. As to quaternary structure, homodimer. The tRNA molecule binds across the dimer.

It localises to the cytoplasm. The catalysed reaction is tRNA(Ser) + L-serine + ATP = L-seryl-tRNA(Ser) + AMP + diphosphate + H(+). It catalyses the reaction tRNA(Sec) + L-serine + ATP = L-seryl-tRNA(Sec) + AMP + diphosphate + H(+). Its pathway is aminoacyl-tRNA biosynthesis; selenocysteinyl-tRNA(Sec) biosynthesis; L-seryl-tRNA(Sec) from L-serine and tRNA(Sec): step 1/1. Functionally, catalyzes the attachment of serine to tRNA(Ser). Is also able to aminoacylate tRNA(Sec) with serine, to form the misacylated tRNA L-seryl-tRNA(Sec), which will be further converted into selenocysteinyl-tRNA(Sec). This is Serine--tRNA ligase from Delftia acidovorans (strain DSM 14801 / SPH-1).